A 371-amino-acid polypeptide reads, in one-letter code: Queuine tRNA-ribosyltransferase (371 aa).

Asp92 acts as the Proton acceptor in catalysis. Residues Asp92–Phe96, Asp147, Gln190, and Gly217 contribute to the substrate site. The segment at Gly248–Asp254 is RNA binding. Residue Asp267 is the Nucleophile of the active site. Residues Thr272–Arg276 form an RNA binding; important for wobble base 34 recognition region.

This sequence belongs to the queuine tRNA-ribosyltransferase family. As to quaternary structure, homodimer. Within each dimer, one monomer is responsible for RNA recognition and catalysis, while the other monomer binds to the replacement base PreQ1.

The catalysed reaction is 7-aminomethyl-7-carbaguanine + guanosine(34) in tRNA = 7-aminomethyl-7-carbaguanosine(34) in tRNA + guanine. Its pathway is tRNA modification; tRNA-queuosine biosynthesis. Functionally, catalyzes the base-exchange of a guanine (G) residue with the queuine precursor 7-aminomethyl-7-deazaguanine (PreQ1) at position 34 (anticodon wobble position) in tRNAs with GU(N) anticodons (tRNA-Asp, -Asn, -His and -Tyr). Catalysis occurs through a double-displacement mechanism. The nucleophile active site attacks the C1' of nucleotide 34 to detach the guanine base from the RNA, forming a covalent enzyme-RNA intermediate. The proton acceptor active site deprotonates the incoming PreQ1, allowing a nucleophilic attack on the C1' of the ribose to form the product. After dissociation, two additional enzymatic reactions on the tRNA convert PreQ1 to queuine (Q), resulting in the hypermodified nucleoside queuosine (7-(((4,5-cis-dihydroxy-2-cyclopenten-1-yl)amino)methyl)-7-deazaguanosine). This is Queuine tRNA-ribosyltransferase from Caulobacter vibrioides (strain ATCC 19089 / CIP 103742 / CB 15) (Caulobacter crescentus).